A 398-amino-acid chain; its full sequence is Acetate kinase 1 (398 aa).

Residue N9 participates in Mg(2+) binding. K16 contributes to the ATP binding site. Residue R89 coordinates substrate. Catalysis depends on D146, which acts as the Proton donor/acceptor. Residues 206–210, 281–283, and 329–333 each bind ATP; these read HLGNG, DCR, and GIGEN. E384 provides a ligand contact to Mg(2+).

Belongs to the acetokinase family. As to quaternary structure, homodimer. It depends on Mg(2+) as a cofactor. Mn(2+) is required as a cofactor.

Its subcellular location is the cytoplasm. The catalysed reaction is acetate + ATP = acetyl phosphate + ADP. Its pathway is metabolic intermediate biosynthesis; acetyl-CoA biosynthesis; acetyl-CoA from acetate: step 1/2. In terms of biological role, catalyzes the formation of acetyl phosphate from acetate and ATP. Can also catalyze the reverse reaction. This Photobacterium profundum (strain SS9) protein is Acetate kinase 1.